The primary structure comprises 478 residues: Odorant receptor coreceptor (478 aa).

The Cytoplasmic segment spans residues 1–43; sequence MMKMKQQGLVADLLPNIRVMKTFGHFVFNYYNDNSSKYLHKVY. Residues 44-64 form a helical membrane-spanning segment; it reads CCVNLFMLLLQFGLCAVNLIV. The Extracellular portion of the chain corresponds to 65-73; the sequence is ESADVDDLT. A helical membrane pass occupies residues 74 to 94; that stretch reads ANTITLLFFTHSIVKICYFAI. Topologically, residues 95–133 are cytoplasmic; sequence RSKYFYRTWAIWNNPNSHPLFAESNARYHAIALKKMRLL. The helical transmembrane segment at 134–154 threads the bilayer; the sequence is LFLVGGTTMLAAVAWTVLTFF. The Extracellular portion of the chain corresponds to 155 to 190; the sequence is EHPIRKIVDPVTNETEIIELPQLLIRSFYPFDAGKG. The N-linked (GlcNAc...) asparagine glycan is linked to Asn167. Residues 191–211 form a helical membrane-spanning segment; that stretch reads ITHVLVLVYQFYWVLFMLIDA. Over 212-349 the chain is Cytoplasmic; sequence NSLDVLFCSW…IVRLVTAVGD (138 aa). Positions 261–281 are disordered; the sequence is SADHLRDGDNPPPPPPPQSDN. The chain crosses the membrane as a helical span at residues 350–370; the sequence is AYGFALLLHMLTTTITLTLLA. Topologically, residues 371–382 are extracellular; the sequence is YQATKVNGINVY. A helical transmembrane segment spans residues 383–403; it reads AASTIGYILYTFGQVFLFCIF. Topologically, residues 404–454 are cytoplasmic; that stretch reads GNRLIEESTSVMEAAYSCHWYDGSEEAKTFVQIVCQQCQKAMSISGAKFFT. Residues 455–475 traverse the membrane as a helical segment; the sequence is VSLDLFASVLGAVVTYFMVLV. Residues 476 to 478 lie on the Extracellular side of the membrane; sequence QLK.

The protein belongs to the insect chemoreceptor superfamily. Heteromeric odorant receptor channel (TC 1.A.69) family. Orco subfamily. In terms of assembly, heterodimer with conventional odorant receptors (ORs). In terms of tissue distribution, present in antennae (at protein level).

The protein localises to the cell membrane. Functionally, odorant coreceptor which complexes with conventional odorant receptors (ORs) to form odorant-sensing units, providing sensitive and prolonged odorant signaling and calcium permeability. Obligate coreceptor of all odorant receptors. Orco is a universal and integral part of the functional odorant receptor, involved in the dendritic localization of other olfactory receptors. Can form functional ion channels in the absence of an odor-binding odorant receptor. Plays a central role in the perception of olfactory stimuli in ants and is essential for ant social organization. Required for pheromone sensing. Also required for the development and maintenance of odorant receptor neurons (ORNs) and of antennal lobe glomeruli. This Ooceraea biroi (Clonal raider ant) protein is Odorant receptor coreceptor.